The sequence spans 573 residues: Dihydroxy-acid dehydratase (573 aa).

A [2Fe-2S] cluster-binding site is contributed by Cys62. Residue Asp94 coordinates Mg(2+). A [2Fe-2S] cluster-binding site is contributed by Cys135. Mg(2+) contacts are provided by Asp136 and Lys137. Lys137 bears the N6-carboxylysine mark. Cys212 lines the [2Fe-2S] cluster pocket. Glu463 provides a ligand contact to Mg(2+). Residue Ser489 is the Proton acceptor of the active site.

Belongs to the IlvD/Edd family. Homodimer. The cofactor is [2Fe-2S] cluster. Requires Mg(2+) as cofactor.

It carries out the reaction (2R)-2,3-dihydroxy-3-methylbutanoate = 3-methyl-2-oxobutanoate + H2O. It catalyses the reaction (2R,3R)-2,3-dihydroxy-3-methylpentanoate = (S)-3-methyl-2-oxopentanoate + H2O. The protein operates within amino-acid biosynthesis; L-isoleucine biosynthesis; L-isoleucine from 2-oxobutanoate: step 3/4. Its pathway is amino-acid biosynthesis; L-valine biosynthesis; L-valine from pyruvate: step 3/4. Its function is as follows. Functions in the biosynthesis of branched-chain amino acids. Catalyzes the dehydration of (2R,3R)-2,3-dihydroxy-3-methylpentanoate (2,3-dihydroxy-3-methylvalerate) into 2-oxo-3-methylpentanoate (2-oxo-3-methylvalerate) and of (2R)-2,3-dihydroxy-3-methylbutanoate (2,3-dihydroxyisovalerate) into 2-oxo-3-methylbutanoate (2-oxoisovalerate), the penultimate precursor to L-isoleucine and L-valine, respectively. In Renibacterium salmoninarum (strain ATCC 33209 / DSM 20767 / JCM 11484 / NBRC 15589 / NCIMB 2235), this protein is Dihydroxy-acid dehydratase.